We begin with the raw amino-acid sequence, 171 residues long: Transcriptional repressor NrdR (171 aa).

Basic residues predominate over residues 1 to 10; that stretch reads MQCPHCHHNG. The interval 1–21 is disordered; it reads MQCPHCHHNGSRVVDSRPTDD. Residues 3-34 fold into a zinc finger; that stretch reads CPHCHHNGSRVVDSRPTDDGRVIRRRRECENC. Residues 49–139 enclose the ATP-cone domain; that stretch reads LLVIKKNGAR…VYRQFKDMHV (91 aa). The disordered stretch occupies residues 152–171; it reads KVKLAKPSAKTTHAPKRKKD.

This sequence belongs to the NrdR family. The cofactor is Zn(2+).

Its function is as follows. Negatively regulates transcription of bacterial ribonucleotide reductase nrd genes and operons by binding to NrdR-boxes. In Lactiplantibacillus plantarum (strain ATCC BAA-793 / NCIMB 8826 / WCFS1) (Lactobacillus plantarum), this protein is Transcriptional repressor NrdR.